We begin with the raw amino-acid sequence, 30 residues long: Brevinin-2Rg (30 aa).

A disulfide bridge links Cys-24 with Cys-30.

Expressed by the skin glands.

The protein localises to the secreted. In terms of biological role, antimicrobial peptide. The chain is Brevinin-2Rg from Pelophylax ridibundus (Marsh frog).